We begin with the raw amino-acid sequence, 433 residues long: ATP-dependent protease ATPase subunit HslU (433 aa).

Residues Ile18, 60–65 (GVGKTE), Asp246, Glu311, and Arg383 each bind ATP.

The protein belongs to the ClpX chaperone family. HslU subfamily. In terms of assembly, a double ring-shaped homohexamer of HslV is capped on each side by a ring-shaped HslU homohexamer. The assembly of the HslU/HslV complex is dependent on binding of ATP.

The protein resides in the cytoplasm. In terms of biological role, ATPase subunit of a proteasome-like degradation complex; this subunit has chaperone activity. The binding of ATP and its subsequent hydrolysis by HslU are essential for unfolding of protein substrates subsequently hydrolyzed by HslV. HslU recognizes the N-terminal part of its protein substrates and unfolds these before they are guided to HslV for hydrolysis. This is ATP-dependent protease ATPase subunit HslU from Cereibacter sphaeroides (strain ATCC 17025 / ATH 2.4.3) (Rhodobacter sphaeroides).